The primary structure comprises 204 residues: Phosphopantothenoylcysteine decarboxylase (204 aa).

FMN contacts are provided by residues Phe59 and 104–107 (DANT). Asn140 is a binding site for substrate. The Proton donor role is filled by Cys173.

The protein belongs to the HFCD (homooligomeric flavin containing Cys decarboxylase) superfamily. As to quaternary structure, homotrimer. It depends on FMN as a cofactor.

The enzyme catalyses N-[(R)-4-phosphopantothenoyl]-L-cysteine + H(+) = (R)-4'-phosphopantetheine + CO2. Its pathway is cofactor biosynthesis; coenzyme A biosynthesis; CoA from (R)-pantothenate: step 3/5. In terms of biological role, catalyzes the decarboxylation of the cysteine moiety of 4-phosphopantothenoylcysteine to form 4'-phosphopantotheine and this reaction forms part of the biosynthesis of coenzyme A. The protein is Phosphopantothenoylcysteine decarboxylase (PPCDC) of Homo sapiens (Human).